The sequence spans 110 residues: Parvalbumin alpha (110 aa).

At serine 2 the chain carries N-acetylserine. Phosphoserine is present on residues serine 2, serine 8, and serine 24. EF-hand domains follow at residues 39–74 (KNPDEVKKVFHILDKDKSGFIEEDELGSILKGFSSD) and 78–110 (LSAKETKTLLAAGDKDGDGKIGVEEFSTLVAES). Residues aspartate 52, aspartate 54, serine 56, phenylalanine 58, glutamate 60, glutamate 63, aspartate 91, aspartate 93, aspartate 95, lysine 97, and glutamate 102 each contribute to the Ca(2+) site.

As to expression, expressed in the modiolar nerve root (at protein level).

In muscle, parvalbumin is thought to be involved in relaxation after contraction. It binds two calcium ions. This chain is Parvalbumin alpha (Pvalb), found in Mus musculus (Mouse).